Reading from the N-terminus, the 399-residue chain is Phosphorylated adapter RNA export protein (399 aa).

Residues Met1–Gly10 show a composition bias toward basic and acidic residues. The disordered stretch occupies residues Met1–Trp83. The segment covering Asp11–Ser22 has biased composition (acidic residues). Polar residues predominate over residues Ser37–Ser53. A compositionally biased stretch (acidic residues) spans Ser68 to Ser80.

The protein belongs to the PHAX family.

Its subcellular location is the nucleus. The protein localises to the cytoplasm. In terms of biological role, probably involved in protein and RNA export from the nucleus. The chain is Phosphorylated adapter RNA export protein (PHAX) from Gallus gallus (Chicken).